Consider the following 337-residue polypeptide: MVQWISPLDNSIVIASKVKILRNIKGIKFTKLLNEEEFNDLLSMVLGRLKEIDILDKCYVVKLKDGEEKIIDYYKENFGLIKYFENKDNLIFIMNKNGEFNILLNEEEHIGIECTNSGLSLREVYSKVDNLDDLIEEKIHYSFDSELGYLTSNIKNLGTALRAKVFIHLPLLSSNNLIRIIKNALKEEGITLKSIYNSGNKDVGNIYEVSNIKTLGMSEKDILDSLISITNKLILREKNQRDNLSKDEYIELKDDILRSLGVLRNTYSIDRDEALKYLSYVRLGVELGIIEDLSLKSVNSAMIEIQPDMINNSSIKKRDIQSLKIERAKIIRNALNT.

Positions 12 to 240 (IVIASKVKIL…NKLILREKNQ (229 aa)) constitute a Phosphagen kinase C-terminal domain. ATP is bound by residues 15–19 (ASKVK), 162–166 (RAKVF), and 193–198 (KSIYNS).

The protein belongs to the ATP:guanido phosphotransferase family.

The enzyme catalyses L-arginyl-[protein] + ATP = N(omega)-phospho-L-arginyl-[protein] + ADP + H(+). Catalyzes the specific phosphorylation of arginine residues in proteins. The polypeptide is Protein-arginine kinase (Clostridium perfringens (strain ATCC 13124 / DSM 756 / JCM 1290 / NCIMB 6125 / NCTC 8237 / Type A)).